The following is an 834-amino-acid chain: Glycerol-3-phosphate acyltransferase (834 aa).

The short motif at 309 to 314 (CHRSHI) is the HXXXXD motif element.

The protein belongs to the GPAT/DAPAT family.

It is found in the cell inner membrane. It carries out the reaction sn-glycerol 3-phosphate + an acyl-CoA = a 1-acyl-sn-glycero-3-phosphate + CoA. The protein operates within phospholipid metabolism; CDP-diacylglycerol biosynthesis; CDP-diacylglycerol from sn-glycerol 3-phosphate: step 1/3. In Pseudomonas paraeruginosa (strain DSM 24068 / PA7) (Pseudomonas aeruginosa (strain PA7)), this protein is Glycerol-3-phosphate acyltransferase.